We begin with the raw amino-acid sequence, 537 residues long: CTP synthase (537 aa).

The segment at 1–268 (MPFKCIFLTG…STFITEKLGL (268 aa)) is amidoligase domain. Serine 14 lines the CTP pocket. Serine 14 is a binding site for UTP. 15-20 (SLGKGL) contributes to the ATP binding site. Position 55 (tyrosine 55) interacts with L-glutamine. Aspartate 72 is an ATP binding site. Residues aspartate 72 and glutamate 142 each coordinate Mg(2+). Residues 149 to 151 (DIE), 188 to 193 (KTKPTQ), and lysine 224 each bind CTP. Residues 188 to 193 (KTKPTQ) and lysine 224 contribute to the UTP site. One can recognise a Glutamine amidotransferase type-1 domain in the interval 294 to 533 (RIGLVGKYVQ…IQAALLYSKN (240 aa)). Glycine 353 contacts L-glutamine. The active-site Nucleophile; for glutamine hydrolysis is cysteine 380. L-glutamine is bound by residues 381 to 384 (LGMQ), glutamate 404, and arginine 461. Residues histidine 506 and glutamate 508 contribute to the active site.

The protein belongs to the CTP synthase family. In terms of assembly, homotetramer.

The enzyme catalyses UTP + L-glutamine + ATP + H2O = CTP + L-glutamate + ADP + phosphate + 2 H(+). The catalysed reaction is L-glutamine + H2O = L-glutamate + NH4(+). It catalyses the reaction UTP + NH4(+) + ATP = CTP + ADP + phosphate + 2 H(+). The protein operates within pyrimidine metabolism; CTP biosynthesis via de novo pathway; CTP from UDP: step 2/2. Allosterically activated by GTP, when glutamine is the substrate; GTP has no effect on the reaction when ammonia is the substrate. The allosteric effector GTP functions by stabilizing the protein conformation that binds the tetrahedral intermediate(s) formed during glutamine hydrolysis. Inhibited by the product CTP, via allosteric rather than competitive inhibition. Catalyzes the ATP-dependent amination of UTP to CTP with either L-glutamine or ammonia as the source of nitrogen. Regulates intracellular CTP levels through interactions with the four ribonucleotide triphosphates. The polypeptide is CTP synthase (Chlamydia caviae (strain ATCC VR-813 / DSM 19441 / 03DC25 / GPIC) (Chlamydophila caviae)).